Here is a 614-residue protein sequence, read N- to C-terminus: DBH-like monooxygenase protein 1 (614 aa).

The first 22 residues, 1-22 (MRPLRPWALLLGALLGAAAAAA), serve as a signal peptide directing secretion. The Lumenal portion of the chain corresponds to 23–592 (RRYPHVAVLD…SSSCLPCSLS (570 aa)). A DOMON domain is found at 35-148 (AAYRLLWGRR…STVRVIWAYH (114 aa)). The N-linked (GlcNAc...) asparagine glycan is linked to Asn114. The active site involves Tyr203. Disulfide bonds link Cys205–Cys257 and Cys242–Cys269. Residues His235 and His236 each coordinate Cu cation. An N-linked (GlcNAc...) asparagine glycan is attached at Asn247. Cu cation-binding residues include His307, His389, His391, and Met464. 3 disulfide bridges follow: Cys364-Cys480, Cys368-Cys550, and Cys443-Cys465. The active site involves His389. Asn476 and Asn517 each carry an N-linked (GlcNAc...) asparagine glycan. Residues 593-613 (LTLLFVVYVASSTIGNFGPVV) form a helical membrane-spanning segment.

It belongs to the copper type II ascorbate-dependent monooxygenase family. Requires Cu(2+) as cofactor.

The protein resides in the endoplasmic reticulum membrane. The protein is DBH-like monooxygenase protein 1 (MOXD1) of Gallus gallus (Chicken).